The chain runs to 429 residues: Glutamate-1-semialdehyde 2,1-aminomutase (429 aa).

The residue at position 270 (Lys-270) is an N6-(pyridoxal phosphate)lysine.

This sequence belongs to the class-III pyridoxal-phosphate-dependent aminotransferase family. HemL subfamily. Homodimer. Pyridoxal 5'-phosphate serves as cofactor.

It localises to the cytoplasm. The catalysed reaction is (S)-4-amino-5-oxopentanoate = 5-aminolevulinate. It functions in the pathway porphyrin-containing compound metabolism; protoporphyrin-IX biosynthesis; 5-aminolevulinate from L-glutamyl-tRNA(Glu): step 2/2. This chain is Glutamate-1-semialdehyde 2,1-aminomutase, found in Cupriavidus pinatubonensis (strain JMP 134 / LMG 1197) (Cupriavidus necator (strain JMP 134)).